Reading from the N-terminus, the 338-residue chain is MSSDNESTPSQATVEMMATSPAKIKEYPEPLALHEVVVKDSSVFWDTLRRFHSIMSTKFMIPVIGGKELDLHVLYVEVTRRGGYEKVVVEKKWREVGGVFRFSATTTSASFVLRKHYLNLLFHYEQVHLFTARGPLLHPIATFHANPSTSKEMALVEYTPPSIRYHNTHPPSQGSSSFTAIGTIEGKFDCGYLVKVKLGSEILNGVLYHSAQPGPSSSPTAVLNNAVVPYVETGRRRRRLGKRRRSRRREDPNYPKPNRSGYNFFFAEKHCKLKSLYPNKEREFTKLIGESWSNLSTEERMVYQDIGLKDKERYQRELNEYRETLRLRDGDMTNGKAF.

The 92-residue stretch at 38–129 (VKDSSVFWDT…LLFHYEQVHL (92 aa)) folds into the ARID domain. A disordered region spans residues 233 to 259 (TGRRRRRLGKRRRSRRREDPNYPKPNR). Residues 235–247 (RRRRRLGKRRRSR) are compositionally biased toward basic residues. Positions 255 to 322 (PKPNRSGYNF…RYQRELNEYR (68 aa)) form a DNA-binding region, HMG box.

In terms of tissue distribution, predominantly expressed in leaves, flowers and seedlings.

It localises to the nucleus. In terms of biological role, binds preferentially DNA with A/T-rich content. Required for karyogamy during female gametophyte development, when the two polar nuclei fuse to form the diploid central cell nucleus. The polypeptide is High mobility group B protein 9 (HMGB9) (Arabidopsis thaliana (Mouse-ear cress)).